Here is a 955-residue protein sequence, read N- to C-terminus: MSGCLQILTVLLCCRFWALVFSQDQSCCVHHAADIPRCRDACEQLASIRSESRLRHLLHRLPSYCPETLSELWICINNSLPGASRKSDGWVGLGCCELAISAECRRDCKQASSKNDISKVCKKDTENPLYSCITKNEMGSVCCSYAGRHTTCREYCQAIFRTDSSPTVSQISAVKEYCQSVSPPLILCVENYTRLHPTHRPIDSLHCCDRAEEAHCQLACKRILRTLSTEQEIMDGLISECGSQPLPQDPLWQCFLGSAHPPANTDPESPPIAKMDSAKLHCCFKANTSICRNMCVEISTSWGTQSWQEFDQHCEYNPVEMDLITCLADVREPCQLGCKELSYCTNFNNRPTELFRSCNVQSDQGALNDFKLWSNGSIRMPLMNIPVLDIRRCRPEMWKTVACALQIKPCYSRSRGSVICRSDCVEILRQCGDRRRFAEAQTPERICDLLSPTDDPERCIPLNRYLTASELESSVEEVIHPCNPNPCPSSHLCHVNRKGCHVGHDCLPYYCVPGCKLGEASEFLVPADARLQVPVHSAQPGCYEVCVCGQSGRLENCAEMPCFDTSKSCQIAGQRRSHGSSFRVDCNPCSCFAGDAVCSSRQCVRSDSSEEDRRLFTGLPCGCADHFVPVCAGNGRTYPSACVARCVGFTDSQFVFGSCRSFDPCSPNPCQRNQRCVPRRQVCLTDLSEFPCPQYECVSRPSSCDQKLLDPVCDTDNMEHANLCVLNLRGKTLAYSGHCQDACRRPREVCAHNGESYSTVCEAFSERVAVDYQGRCHAVGLESEFGSDSGCNAVPCPPLASDACQPVTPPGACCPVCAGMLRILWNKAQMNIFAKLNRDQPVSLHDILKILRLHVSVPQCDIFGYLSINSEIIILIAPVDQQPTPLQIEACSKEAEKIDSLINSGSPTLVSHVPLSAFLSSELQLSSVRSSSCVSISVCVLLLLCSLILTLTSDL.

The first 22 residues, 1–22, serve as a signal peptide directing secretion; sequence MSGCLQILTVLLCCRFWALVFS. One copy of the Knot 1 repeat lies at 28–75; it reads CVHHAADIPRCRDACEQLASIRSESRLRHLLHRLPSYCPETLSELWIC. The interval 28–326 is 5 X Knot repeats; sequence CVHHAADIPR…NPVEMDLITC (299 aa). Asn77 carries N-linked (GlcNAc...) asparagine glycosylation. Knot repeat units follow at residues 95–132 and 142–188; these read CCEL…LYSC and CCSY…LILC. N-linked (GlcNAc...) asparagine glycosylation occurs at Asn191. 2 Knot repeats span residues 207-254 and 282-326; these read CCDR…LWQC and CCFK…LITC. 2 N-linked (GlcNAc...) asparagine glycosylation sites follow: Asn287 and Asn375. 3 Kazal-like domains span residues 615 to 661, 686 to 741, and 742 to 778; these read LFTG…SCRS, DLSE…HCQD, and ACRR…RCHA. 5 cysteine pairs are disulfide-bonded: Cys621/Cys646, Cys623/Cys642, Cys631/Cys659, Cys704/Cys724, and Cys713/Cys739. Residue Ser931 is the site of GPI-anchor amidated serine attachment. A propeptide spanning residues 932–955 is cleaved from the precursor; that stretch reads SCVSISVCVLLLLCSLILTLTSDL.

The protein belongs to the RECK family. Interacts (via knot repeats) with wnt7a (via disordered linker region); the interaction is direct. Interacts (via knot repeats) with wnt7b (via disordered linker region); the interaction is direct. Interacts with adgra2; the interaction is direct. In terms of tissue distribution, expressed in the cerebral endothelium.

The protein resides in the cell membrane. Its function is as follows. Functions together with adgra2 to enable brain endothelial cells to selectively respond to Wnt7 signals (wnt7a or wnt7b). Plays a key role in Wnt7-specific responses: required for central nervous system (CNS) angiogenesis and blood-brain barrier regulation. Acts as a Wnt7-specific coactivator of canonical Wnt signaling by decoding Wnt ligands: acts by interacting specifically with the disordered linker region of Wnt7, thereby conferring ligand selectivity for Wnt7. Adgra2 is then required to deliver reck-bound Wnt7 to frizzled by assembling a higher-order RECK-ADGRA2-Fzd-LRP5-LRP6 complex. Also acts as a serine protease inhibitor. This is Reversion-inducing cysteine-rich protein with Kazal motifs from Danio rerio (Zebrafish).